We begin with the raw amino-acid sequence, 338 residues long: Bifunctional methylenetetrahydrofolate dehydrogenase/cyclohydrolase 2, mitochondrial (338 aa).

Residues 89 to 93 (YVRNK) and 136 to 138 (VQL) contribute to the substrate site. NAD(+) contacts are provided by residues 205–207 (GRS) and arginine 238. 314–318 (PGGVG) contributes to the substrate binding site.

Belongs to the tetrahydrofolate dehydrogenase/cyclohydrolase family. Mg(2+) serves as cofactor. As to expression, widely expressed.

The protein resides in the mitochondrion inner membrane. The enzyme catalyses (6R)-5,10-methylene-5,6,7,8-tetrahydrofolate + NADP(+) = (6R)-5,10-methenyltetrahydrofolate + NADPH. It carries out the reaction (6R)-5,10-methylene-5,6,7,8-tetrahydrofolate + NAD(+) = (6R)-5,10-methenyltetrahydrofolate + NADH. It catalyses the reaction (6R)-5,10-methenyltetrahydrofolate + H2O = (6R)-10-formyltetrahydrofolate + H(+). It functions in the pathway one-carbon metabolism; tetrahydrofolate interconversion. Bifunctional mitochondrial folate-interconverting enzyme that has both NAD/NADP-dependent methylenetetrahydrofolate dehydrogenase and methenyltetrahydrofolate cyclohydrolase activities. Its function is as follows. Has no NAD/NADP-dependent methylenetetrahydrofolate dehydrogenase activity. The chain is Bifunctional methylenetetrahydrofolate dehydrogenase/cyclohydrolase 2, mitochondrial from Rattus norvegicus (Rat).